The chain runs to 107 residues: Small ribosomal subunit protein uS17 (107 aa).

This sequence belongs to the universal ribosomal protein uS17 family. In terms of assembly, part of the 30S ribosomal subunit.

Its function is as follows. One of the primary rRNA binding proteins, it binds specifically to the 5'-end of 16S ribosomal RNA. This Thermotoga petrophila (strain ATCC BAA-488 / DSM 13995 / JCM 10881 / RKU-1) protein is Small ribosomal subunit protein uS17.